The sequence spans 561 residues: Urocanate hydratase (561 aa).

NAD(+) contacts are provided by residues 52-53, glutamine 130, 176-178, glutamate 196, arginine 201, 242-243, 263-267, 273-274, and tyrosine 322; these read GG, GMG, NA, QTSAH, and YL. Cysteine 410 is a catalytic residue. Glycine 492 contacts NAD(+).

Belongs to the urocanase family. Requires NAD(+) as cofactor.

It is found in the cytoplasm. The catalysed reaction is 4-imidazolone-5-propanoate = trans-urocanate + H2O. It functions in the pathway amino-acid degradation; L-histidine degradation into L-glutamate; N-formimidoyl-L-glutamate from L-histidine: step 2/3. Functionally, catalyzes the conversion of urocanate to 4-imidazolone-5-propionate. In Enterobacter sp. (strain 638), this protein is Urocanate hydratase.